A 610-amino-acid polypeptide reads, in one-letter code: Transcription termination factor Rho (610 aa).

The disordered stretch occupies residues 117–227 (EVSRRERRGA…GDGAEAELRQ (111 aa)). Positions 118–131 (VSRRERRGASREAD) are enriched in basic and acidic residues. Over residues 178-187 (GVEQQSSSLQ) the composition is skewed to polar residues. Residues 189–198 (RGDDDGEGRQ) are compositionally biased toward basic and acidic residues. Residues 199–214 (GRRGRRFRDRDRRRRG) show a composition bias toward basic residues. Positions 215 to 227 (ERSGDGAEAELRQ) are enriched in basic and acidic residues. Residues 231 to 309 (VQPVAGILDV…VRLDSINGGS (79 aa)) form the Rho RNA-BD domain. ATP is bound by residues 352–357 (GKGQRA), 364–369 (KAGKTT), and arginine 395.

This sequence belongs to the Rho family. Homohexamer. The homohexamer assembles into an open ring structure.

In terms of biological role, facilitates transcription termination by a mechanism that involves Rho binding to the nascent RNA, activation of Rho's RNA-dependent ATPase activity, and release of the mRNA from the DNA template. The polypeptide is Transcription termination factor Rho (Mycobacterium leprae (strain TN)).